We begin with the raw amino-acid sequence, 408 residues long: Aminoacylase-1 (408 aa).

His-76 is a binding site for Zn(2+). Residue Asp-78 is part of the active site. Asp-109 is a binding site for Zn(2+). Glu-143 acts as the Proton acceptor in catalysis. Positions 144, 172, and 379 each coordinate Zn(2+).

The protein belongs to the peptidase M20A family. In terms of assembly, homodimer. Zn(2+) is required as a cofactor.

The protein resides in the cytoplasm. The enzyme catalyses an N-acyl-L-amino acid + H2O = an L-alpha-amino acid + a carboxylate. The catalysed reaction is an N-acetyl-L-cysteine-S-conjugate + H2O = an S-substituted L-cysteine + acetate. In terms of biological role, involved in the hydrolysis of N-acylated or N-acetylated amino acids (except L-aspartate). In Dictyostelium discoideum (Social amoeba), this protein is Aminoacylase-1 (acy1).